Consider the following 292-residue polypeptide: Sulfofructosephosphate aldolase (292 aa).

Lys-193 acts as the Schiff-base intermediate with substrate in catalysis.

This sequence belongs to the aldolase LacD family. In terms of assembly, homotetramer.

It catalyses the reaction 6-deoxy-6-sulfo-D-fructose 1-phosphate = (2S)-3-sulfolactaldehyde + dihydroxyacetone phosphate. In terms of biological role, cleaves 6-deoxy-6-sulfo-D-fructose 1-phosphate (SFP) to form dihydroxyacetone phosphate (DHAP) and 3-sulfolactaldehyde (SLA). Can also catalyze the reverse reaction. In Salmonella typhimurium (strain LT2 / SGSC1412 / ATCC 700720), this protein is Sulfofructosephosphate aldolase (yihT).